The following is a 189-amino-acid chain: Interferon alpha-8 (189 aa).

The first 23 residues, 1–23 (MALTFYLLVALVVLSYKSFSSLG), serve as a signal peptide directing secretion. 2 disulfide bridges follow: cysteine 24/cysteine 122 and cysteine 52/cysteine 162.

It belongs to the alpha/beta interferon family.

It is found in the secreted. Produced by macrophages, IFN-alpha have antiviral activities. Interferon stimulates the production of two enzymes: a protein kinase and an oligoadenylate synthetase. The chain is Interferon alpha-8 (IFNA8) from Homo sapiens (Human).